The primary structure comprises 316 residues: Pentatricopeptide repeat-containing protein At1g19525 (316 aa).

6 PPR repeats span residues 9-43 (DILTATALVHMYSKSGNFERATEAFENLKSYGLRP), 44-78 (DEKIYEAMILGYVNAGKPKLGERLMKEMQAKELKA), 79-113 (SEEVYMALLRAYAQMGDANGAAGISSSMQYASDGP), 115-149 (SFEAYSLFVEAYGKAGQVDKAKSNFDEMRKLGHKP), 150-184 (DDKCIANLVRAYKGENSLDKALRLLLQLEKDGIEI), and 185-219 (GVITYTVLVDWMANLGLIEEAEQLLVKISQLGEAP).

Belongs to the PPR family. P subfamily.

The protein is Pentatricopeptide repeat-containing protein At1g19525 of Arabidopsis thaliana (Mouse-ear cress).